The sequence spans 242 residues: tRNA (guanine-N(1)-)-methyltransferase (242 aa).

Residues glycine 114 and 134–139 (IGDFVL) contribute to the S-adenosyl-L-methionine site. The segment covering 223-233 (RRDLLPEHSKN) has biased composition (basic and acidic residues). The interval 223-242 (RRDLLPEHSKNNPEQTNKLS) is disordered.

The protein belongs to the RNA methyltransferase TrmD family. Homodimer.

Its subcellular location is the cytoplasm. The catalysed reaction is guanosine(37) in tRNA + S-adenosyl-L-methionine = N(1)-methylguanosine(37) in tRNA + S-adenosyl-L-homocysteine + H(+). Specifically methylates guanosine-37 in various tRNAs. In Rhodopirellula baltica (strain DSM 10527 / NCIMB 13988 / SH1), this protein is tRNA (guanine-N(1)-)-methyltransferase.